Here is a 251-residue protein sequence, read N- to C-terminus: Type III pantothenate kinase (251 aa).

6–13 (DCGNSFIK) provides a ligand contact to ATP. Substrate is bound by residues Tyr93 and 100-103 (GLDR). Asp102 (proton acceptor) is an active-site residue. Asp122 lines the K(+) pocket. An ATP-binding site is contributed by Thr125. Thr182 provides a ligand contact to substrate.

Belongs to the type III pantothenate kinase family. In terms of assembly, homodimer. It depends on NH4(+) as a cofactor. K(+) is required as a cofactor.

Its subcellular location is the cytoplasm. The catalysed reaction is (R)-pantothenate + ATP = (R)-4'-phosphopantothenate + ADP + H(+). It functions in the pathway cofactor biosynthesis; coenzyme A biosynthesis; CoA from (R)-pantothenate: step 1/5. Its function is as follows. Catalyzes the phosphorylation of pantothenate (Pan), the first step in CoA biosynthesis. The polypeptide is Type III pantothenate kinase (Azotobacter vinelandii (strain DJ / ATCC BAA-1303)).